The sequence spans 583 residues: Laccase-14 (583 aa).

A signal peptide spans 1-30 (MAPSLGSGSTRILLIVSLLLCLRQQAVVDA). Plastocyanin-like domains are found at residues 38 to 158 (HVGN…PRPG) and 168 to 320 (AEHT…YDDD). N-linked (GlcNAc...) asparagine glycans are attached at residues Asn41 and Asn84. Cu cation contacts are provided by His88 and His90. A glycan (N-linked (GlcNAc...) asparagine) is linked at Asn126. Cu cation contacts are provided by His137 and His139. Asn179, Asn251, Asn304, Asn338, Asn388, Asn400, Asn446, and Asn464 each carry an N-linked (GlcNAc...) asparagine glycan. Residues 426 to 567 (DFPDRPPVMF…AMAFDVQDGP (142 aa)) form the Plastocyanin-like 3 domain. Positions 482, 485, 487, 546, 547, 548, and 552 each coordinate Cu cation.

Belongs to the multicopper oxidase family. Requires Cu cation as cofactor.

Its subcellular location is the secreted. The protein localises to the extracellular space. It is found in the apoplast. It carries out the reaction 4 hydroquinone + O2 = 4 benzosemiquinone + 2 H2O. Lignin degradation and detoxification of lignin-derived products. This Oryza sativa subsp. japonica (Rice) protein is Laccase-14 (LAC14).